Here is a 389-residue protein sequence, read N- to C-terminus: Chromobox protein homolog 8 (389 aa).

Residues F11 to P69 enclose the Chromo domain. Phosphoserine occurs at positions 110 and 130. The interval L124–F241 is disordered. A compositionally biased stretch (basic and acidic residues) spans E145–P189. S191, S256, S265, S311, S332, and S352 each carry phosphoserine. The disordered stretch occupies residues G298–Q327.

Component of a PRC1-like complex. Interacts with RING1 RNF2, PCGF1, PCGF2, PCGF3, BMI1, PCGF5 and PCGF6. Interacts with MLLT3 and histone H3. Interacts with PHC2.

It is found in the nucleus. Its function is as follows. Component of a Polycomb group (PcG) multiprotein PRC1-like complex, a complex class required to maintain the transcriptionally repressive state of many genes, including Hox genes, throughout development. PcG PRC1 complex acts via chromatin remodeling and modification of histones; it mediates monoubiquitination of histone H2A 'Lys-119', rendering chromatin heritably changed in its expressibility. The chain is Chromobox protein homolog 8 (CBX8) from Homo sapiens (Human).